The primary structure comprises 335 residues: NmrA-like family domain-containing oxidoreductase hkm9 (335 aa).

NADP(+) contacts are provided by residues 12–17, 38–42, 59–60, 80–82, lysine 137, and 161–164; these read GATGNQ, RNPNS, DG, INS, and YLEN.

This sequence belongs to the NmrA-type oxidoreductase family.

It participates in secondary metabolite biosynthesis. In terms of biological role, nmrA-like family domain-containing oxidoreductase; part of the gene cluster that mediates the biosynthesis of hancockiamides, an unusual new family of N-cinnamoylated piperazines. The NRPS hkm10 and the NmrA-like reductase hkm9 are proposed to convert two molecules of L-Phe to the intermediary piperazine called xenocockiamide A. Xenocockiamide A is then converted to hancockiamide D via a series of hydroxylations and O-methylations. The tyrosinase hkm6 may catalyze an aromatic hydroxylation, then the 2-oxoglutarate-dependent Fe(II) dioxygenase hkm4 and the FAD-dependent phenol hydroxylase hkm7 may catalyze consecutive hydroxylations to install 2 more hydroxy groups, and the methyltransferase hkm8 probably catalyzes two methylations using 2 molecules of S-adenosyl-L-methionine (SAM). The NRPS hkm11 activates and transfers trans-cinnamate supplied by the PAL hkm12 to hancockiamide D and produces hancockiamide A. NRPS Hkm11 has the flexibility to tolerate the bulky hancockiamide G as a substrate and the absence of the acetyl-transferase hkm3 opens up the opportunity for hkm11 to introduce a second N-cinnamoyl moiety. The cytochrome P450 monooxygenase hkm5 catalyzes the methylenedioxy bridge formation, converting hancockiamide A into hancockiamide G. Hkm5 can also convert hancockiamide B into hancockiamide C, and hancockiamide D into hancockiamide H. The N-acetyltransferase hkm3 finally transfers an acetyl group to 1-N of piperazine, converting hancockiamide A into hancockiamide B and hancockiamide G into hancockiamide C. The protein is NmrA-like family domain-containing oxidoreductase hkm9 of Aspergillus hancockii.